The primary structure comprises 218 residues: Replication protein RepB (218 aa).

The disordered stretch occupies residues 1-26; it reads MKSESKIDWTVPRPNKNPKTKQPYKR. The span at 16–26 shows a compositional bias: basic residues; sequence KNPKTKQPYKR.

It belongs to the Gram-positive plasmids replication protein type 2 family.

Functionally, is essential for plasmid replication. Nicks the positive strand at the plus origin of replication. This is Replication protein RepB (repB) from Lactiplantibacillus plantarum (Lactobacillus plantarum).